Consider the following 425-residue polypeptide: Serine--tRNA ligase (425 aa).

Threonine 228–glutamate 230 provides a ligand contact to L-serine. Arginine 259–glutamate 261 serves as a coordination point for ATP. Glutamate 282 lines the L-serine pocket. An ATP-binding site is contributed by glutamate 346–serine 349. Serine 382 provides a ligand contact to L-serine.

The protein belongs to the class-II aminoacyl-tRNA synthetase family. Type-1 seryl-tRNA synthetase subfamily. As to quaternary structure, homodimer. The tRNA molecule binds across the dimer.

It localises to the cytoplasm. It carries out the reaction tRNA(Ser) + L-serine + ATP = L-seryl-tRNA(Ser) + AMP + diphosphate + H(+). It catalyses the reaction tRNA(Sec) + L-serine + ATP = L-seryl-tRNA(Sec) + AMP + diphosphate + H(+). Its pathway is aminoacyl-tRNA biosynthesis; selenocysteinyl-tRNA(Sec) biosynthesis; L-seryl-tRNA(Sec) from L-serine and tRNA(Sec): step 1/1. Catalyzes the attachment of serine to tRNA(Ser). Is also able to aminoacylate tRNA(Sec) with serine, to form the misacylated tRNA L-seryl-tRNA(Sec), which will be further converted into selenocysteinyl-tRNA(Sec). This is Serine--tRNA ligase from Rickettsia akari (strain Hartford).